Consider the following 529-residue polypeptide: O-acetylstemmadenine oxidase (529 aa).

Positions 1–23 (MIKKVPIVLSIFCFLLLLSSSHG) are cleaved as a signal peptide. Cys-32 and Cys-92 are disulfide-bonded. Residue Asn-52 is glycosylated (N-linked (GlcNAc...) asparagine). The FAD-binding PCMH-type domain occupies 70–244 (KSPKPLAIIT…VSWKVKLVKV (175 aa)). FAD is bound by residues 102–108 (IRSGGAD), Ser-113, 168–169 (VS), 173–177 (GIGGH), and Phe-183. A glycan (N-linked (GlcNAc...) asparagine) is linked at Asn-293. Residue Trp-465 coordinates FAD.

This sequence belongs to the oxygen-dependent FAD-linked oxidoreductase family. FAD serves as cofactor. In terms of tissue distribution, expressed in leaf epidermis.

It localises to the endoplasmic reticulum. The protein resides in the vacuole. Its subcellular location is the vesicle. It catalyses the reaction O-acetyl-15alpha-stemmadenine + O2 = precondylocarpine acetate + H2O2. It functions in the pathway alkaloid biosynthesis. Component of the seco-iridoid and derivatives monoterpenoid indole alkaloids (MIAs, e.g. vinblastine, catharanthine, tabersonine, vincadifformine, vindoline, vincristine, quinine and strychnine) biosynthesis pathway. Converts O-acetylstemmadenine (OAS) to reactive acetylated intermediates, likely dihydroprecondylocarpine acetate. This Catharanthus roseus (Madagascar periwinkle) protein is O-acetylstemmadenine oxidase.